Reading from the N-terminus, the 115-residue chain is MTTSFYFLLMALGLLLYVCQSSFGNQHTRTFDTPKHRCGSEITNSYMDLCYRKRNDAGKKRGRASPLWQRRGSLSQLKARAKRNGAFHLPRDGRGVVEHCCHRPCSNAEFKKYCS.

The first 24 residues, 1-24 (MTTSFYFLLMALGLLLYVCQSSFG), serve as a signal peptide directing secretion. A propeptide spanning residues 25-29 (NQHTR) is cleaved from the precursor. Pro34 is subject to 4-hydroxyproline; partial. Cystine bridges form between Cys38-Cys101, Cys50-Cys114, and Cys100-Cys105. 4-carboxyglutamate is present on Glu41. The propeptide at 53-94 (KRNDAGKKRGRASPLWQRRGSLSQLKARAKRNGAFHLPRDGR) is c peptide. The residue at position 98 (Glu98) is a 4-carboxyglutamate. 4-hydroxyproline; partial is present on Pro104. The residue at position 109 (Glu109) is a 4-carboxyglutamate; partial.

Belongs to the insulin family. In terms of assembly, heterodimer of A and B chains; disulfide-linked. In terms of processing, is different from Con-Ins G1a (AC A0A0B5AC95) due to absence of amidation at Cys-114. As to expression, expressed by the venom gland.

The protein localises to the secreted. In terms of biological role, this venom insulin, from a fish-hunting cone snail, facilitates prey capture by rapidly inducing hypoglycemic shock. It is one of the smallest known insulin found in nature and lacks the C-terminal segment of the B chain that, in human insulin, mediates engagement of the insulin receptor (INSR) and assembly of the hormone's hexameric storage form. Despite lacking this segment, it both binds and activates human insulin receptor (long isoform (HIR-B)) with only a 10-fold lower potency. In vivo, intraperitoneal injection of this peptide into zebrafish lowers blood glucose with the same potency than human insulin. In addition, when applied to water, this peptide reduces overall locomotor activity of zebrafish larvae, observed as a significant decrease in the percentage of time spent swimming and movement frequency. The sequence is that of Con-Ins G1c from Conus geographus (Geography cone).